We begin with the raw amino-acid sequence, 237 residues long: BTB/POZ domain-containing protein KCTD6 (237 aa).

Residues 1 to 104 (MDNGDWGYMM…FYQIEPLIQC (104 aa)) are interaction with ANK1 isoform Mu17. Residues 10–110 (MTDPVTLNVG…LIQCLNDPKP (101 aa)) form an interaction with CUL3 region. The BTB domain occupies 12–81 (DPVTLNVGGH…LRTSELTLPL (70 aa)). The segment at 113–187 (PMDTFEEVVE…TFGPCDYHQE (75 aa)) is interaction with USP21.

As to quaternary structure, homopentamer. Interacts with KCTD11; KCTD6 and KCTD11 may associate in pentameric assemblies. Interacts (via BTB domain) with CUL3; initially a 4:4 stoichiometry has been reported, however, electron microscopy revealed pentameric states with a five-pointed pinwheel shape. The interaction with CUL3 is indicative for a participation in a BCR (BTB-CUL3-RBX1) E3 ubiquitin-protein ligase complex. Interacts with HDAC1; probably indirect as the interaction is requires the presence of KCTD11. Interacts with USP21 (preferentially catalytic inactive form). Interacts with ANK1 isoform Mu17; detected in striated muscle. Interacts with USP11. As to expression, highly expressed in cerebellum and brain. Expression is down-regulated in medulloblastoma.

It is found in the cytoplasm. It localises to the myofibril. The protein resides in the sarcomere. The protein localises to the m line. The protein operates within protein modification; protein ubiquitination. In terms of biological role, probable substrate-specific adapter of a BCR (BTB-CUL3-RBX1) E3 ubiquitin-protein ligase complex mediating the ubiquitination and subsequent proteasomal degradation of target proteins. Promotes the ubiquitination of HDAC1; the function seems to depend on KCTD11:KCTD6 oligomerization. Can function as antagonist of the Hedgehog pathway by affecting the nuclear transfer of transcription factor GLI1; the function probably occurs via HDAC1 down-regulation, keeping GLI1 acetylated and inactive. Inhibits cell growth and tumorigenicity of medulloblastoma (MDB). Involved in regulating protein levels of ANK1 isoform Mu17 probably implicating CUL3-dependent proteasomal degradation. The sequence is that of BTB/POZ domain-containing protein KCTD6 (KCTD6) from Homo sapiens (Human).